The chain runs to 92 residues: DNA-directed RNA polymerase subunit Rpo11 (92 aa).

The protein belongs to the archaeal Rpo11/eukaryotic RPB11/RPC19 RNA polymerase subunit family. As to quaternary structure, part of the RNA polymerase complex.

It localises to the cytoplasm. It catalyses the reaction RNA(n) + a ribonucleoside 5'-triphosphate = RNA(n+1) + diphosphate. DNA-dependent RNA polymerase (RNAP) catalyzes the transcription of DNA into RNA using the four ribonucleoside triphosphates as substrates. The protein is DNA-directed RNA polymerase subunit Rpo11 of Methanosarcina mazei (strain ATCC BAA-159 / DSM 3647 / Goe1 / Go1 / JCM 11833 / OCM 88) (Methanosarcina frisia).